The chain runs to 819 residues: Protein EFR3 homolog A (819 aa).

Phosphoserine occurs at positions 360, 363, 420, and 692.

The protein belongs to the EFR3 family. In terms of assembly, component of a phosphatidylinositol 4-kinase (PI4K) complex, composed of PI4KA, EFR3 (EFR3A or EFR3B), TTC7 (TTC7A or TTC7B) and HYCC (HYCC1 or HYCC2). Palmitoylated at its N-terminus, anchoring the protein to the plasma membrane. In terms of tissue distribution, widely expressed. Expressed in neurons of the superior olivary complex of the auditory brainstem. Also expressed at lower levels in the cochlear nucleus, the lateral leminiscal nuclei and the inferior collicus.

Its subcellular location is the cell membrane. It localises to the cytoplasm. It is found in the cytosol. Its function is as follows. Component of a complex required to localize phosphatidylinositol 4-kinase (PI4K) to the plasma membrane. The complex acts as a regulator of phosphatidylinositol 4-phosphate (PtdIns(4)P) synthesis. In the complex, EFR3A probably acts as the membrane-anchoring component. Also involved in responsiveness to G-protein-coupled receptors; it is however unclear whether this role is direct or indirect. This is Protein EFR3 homolog A from Mus musculus (Mouse).